Here is a 342-residue protein sequence, read N- to C-terminus: Manganese-dependent ADP-ribose/CDP-alcohol diphosphatase (342 aa).

The Zn(2+) site is built by D18, Q20, D67, N103, H239, H276, and H278.

The protein belongs to the ADPRibase-Mn family. Monomer. Mg(2+) is required as a cofactor.

The enzyme catalyses CDP-choline + H2O = phosphocholine + CMP + 2 H(+). It carries out the reaction ADP-D-ribose + H2O = D-ribose 5-phosphate + AMP + 2 H(+). The catalysed reaction is CDP-glycerol + H2O = sn-glycerol 3-phosphate + CMP + 2 H(+). Its function is as follows. Hydrolyzes ADP-ribose, IDP-ribose, CDP-glycerol, CDP-choline and CDP-ethanolamine, but not other non-reducing ADP-sugars or CDP-glucose. The chain is Manganese-dependent ADP-ribose/CDP-alcohol diphosphatase (adprm) from Xenopus tropicalis (Western clawed frog).